The primary structure comprises 229 residues: Clathrin light chain B (229 aa).

Composition is skewed to low complexity over residues 1 to 17 (MAEDFGFFSSSESGAPE) and 45 to 58 (GAPAASQVASAQPG). Residues 1–70 (MAEDFGFFSS…SGAGSEDMST (70 aa)) form a disordered region. Ser11 and Ser13 each carry phosphoserine. The segment at 93–155 (ADRLTQEPES…QVEKNKINNR (63 aa)) is involved in binding clathrin heavy chain. Thr187 carries the phosphothreonine modification. The cysteines at positions 199 and 209 are disulfide-linked. At Lys204 the chain carries N6-acetyllysine. The residue at position 217 (Ser217) is a Phosphoserine.

It belongs to the clathrin light chain family. Clathrin coats are formed from molecules containing 3 heavy chains and 3 light chains. Interacts (via N-terminus) with HIP1. Interacts with HIP1R.

It localises to the cytoplasmic vesicle membrane. Its subcellular location is the membrane. The protein resides in the coated pit. Its function is as follows. Clathrin is the major protein of the polyhedral coat of coated pits and vesicles. This Mus musculus (Mouse) protein is Clathrin light chain B (Cltb).